The primary structure comprises 450 residues: Putative cysteine--tRNA ligase 2 (450 aa).

The 'HIGH' region motif lies at 29 to 39; sequence ITPYKSTHLGH. A 'KMSKS' region motif is present at residues 270-274; it reads KMSKS. Lys273 is an ATP binding site. The segment at 372-392 is disordered; it reads PIHPKHSPQMRDYSEHGSAGQ.

This sequence belongs to the class-I aminoacyl-tRNA synthetase family. As to quaternary structure, monomer.

It is found in the cytoplasm. The enzyme catalyses tRNA(Cys) + L-cysteine + ATP = L-cysteinyl-tRNA(Cys) + AMP + diphosphate. The protein is Putative cysteine--tRNA ligase 2 (cysS2) of Tropheryma whipplei (strain TW08/27) (Whipple's bacillus).